Reading from the N-terminus, the 123-residue chain is DNA-directed RNA polymerase subunit omega (123 aa).

The interval 72–100 (QRVLPSEDEEDAAREERGQQMEALPAPPV) is disordered.

It belongs to the RNA polymerase subunit omega family. As to quaternary structure, the RNAP catalytic core consists of 2 alpha, 1 beta, 1 beta' and 1 omega subunit. When a sigma factor is associated with the core the holoenzyme is formed, which can initiate transcription.

The enzyme catalyses RNA(n) + a ribonucleoside 5'-triphosphate = RNA(n+1) + diphosphate. Functionally, promotes RNA polymerase assembly. Latches the N- and C-terminal regions of the beta' subunit thereby facilitating its interaction with the beta and alpha subunits. The protein is DNA-directed RNA polymerase subunit omega of Maricaulis maris (strain MCS10) (Caulobacter maris).